We begin with the raw amino-acid sequence, 184 residues long: Peptidyl-tRNA hydrolase (184 aa).

Tyr14 contributes to the tRNA binding site. Residue His19 is the Proton acceptor of the active site. Residues Phe64, Asn66, and Asn112 each coordinate tRNA.

Belongs to the PTH family. Monomer.

The protein localises to the cytoplasm. It catalyses the reaction an N-acyl-L-alpha-aminoacyl-tRNA + H2O = an N-acyl-L-amino acid + a tRNA + H(+). Its function is as follows. Hydrolyzes ribosome-free peptidyl-tRNAs (with 1 or more amino acids incorporated), which drop off the ribosome during protein synthesis, or as a result of ribosome stalling. Catalyzes the release of premature peptidyl moieties from peptidyl-tRNA molecules trapped in stalled 50S ribosomal subunits, and thus maintains levels of free tRNAs and 50S ribosomes. This is Peptidyl-tRNA hydrolase from Listeria innocua serovar 6a (strain ATCC BAA-680 / CLIP 11262).